The chain runs to 570 residues: Serine/threonine-protein kinase flr-4 (570 aa).

In terms of domain architecture, Protein kinase spans 40-331 (YKYIQDLGKG…KLRIQIKKIL (292 aa)). ATP contacts are provided by residues 46–54 (LGKGRFGTV) and Lys67. Asp172 (proton acceptor) is an active-site residue. A disordered region spans residues 338–369 (EEETDISHPISNSNTDSSTAISHNHSNDRKVG). Residues 346–361 (PISNSNTDSSTAISHN) show a composition bias toward polar residues. The next 3 helical transmembrane spans lie at 400 to 420 (IMQI…FLNI), 425 to 445 (ICYL…FLLI), and 471 to 491 (LIIS…CCMV). The interval 550 to 570 (VRRNHDDYYYDESSGPANEEN) is disordered.

It belongs to the protein kinase superfamily. Ser/Thr protein kinase family. Present in the intestinal cells from comma-stage embryos through the adult stage, although the intestinal expression is weaker after the L1 stage. Accumulates at the cell membrane of intestinal cells, especially the lateral membrane intervening the intestinal cells. Also detected in the muscles of the pharyngeal isthmus from the 3-fold embryonic stage, and in a pair of head neurons, which correspond to the AUA neurons, from the late L1 stage (at protein level).

It localises to the membrane. The enzyme catalyses L-seryl-[protein] + ATP = O-phospho-L-seryl-[protein] + ADP + H(+). It carries out the reaction L-threonyl-[protein] + ATP = O-phospho-L-threonyl-[protein] + ADP + H(+). Functionally, probable serine-threonine protein kinase involved in the control of defecation rhythms. Required to increase the length of defecation cycle period. Acts in a cell-functional rather than developmental aspect in the regulation of defecation rhythms. Prevents preferential activation of the p38 MAPK pathway in response to the levels of vitamin B12 in different food types during larval development, thereby regulating the expression of cytoprotective genes, modulating life span and stress tolerance. The sequence is that of Serine/threonine-protein kinase flr-4 (flr-4) from Caenorhabditis elegans.